Here is a 182-residue protein sequence, read N- to C-terminus: uncharacterized protein (182 aa).

Transmembrane regions (helical) follow at residues 58-78 (ILFG…YVVY) and 81-101 (PVSI…IIIW).

To M.jannaschii MJ0803.

It localises to the cell membrane. This is an uncharacterized protein from Methanocaldococcus jannaschii (strain ATCC 43067 / DSM 2661 / JAL-1 / JCM 10045 / NBRC 100440) (Methanococcus jannaschii).